Here is a 521-residue protein sequence, read N- to C-terminus: Phosphoethanolamine transferase EptA (521 aa).

Helical transmembrane passes span 18 to 38, 47 to 67, 79 to 99, 118 to 138, 150 to 170, and 182 to 202; these read AGLLYSLIFGVLYHFPLFVYV, FIAMMVVVLFCVNGALFLALG, IVFSLLNSVAFYFISAYKVFL, FLSVKLFVFIVVFGVLPGYVI, APFLAILALVFIFIASALANT, and FIGGLILPFAYSVNAFRVSAL.

Belongs to the phosphoethanolamine transferase family. EptA subfamily.

It is found in the cell inner membrane. Its pathway is bacterial outer membrane biogenesis; LPS lipid A biosynthesis. In terms of biological role, probably catalyzes the addition of a phosphoethanolamine moiety to the dephosphorylated 1-position of the disaccharide backbone of lipid A. Lipid A that is 1-phosphorylated is not a substrate for this enzyme. This chain is Phosphoethanolamine transferase EptA, found in Helicobacter pylori (strain ATCC 700392 / 26695) (Campylobacter pylori).